We begin with the raw amino-acid sequence, 495 residues long: Cobyric acid synthase (495 aa).

Positions 250–444 (SLKISILRLP…LHGLFDNGAW (195 aa)) constitute a GATase cobBQ-type domain. Residue Cys331 is the Nucleophile of the active site. His436 is an active-site residue.

This sequence belongs to the CobB/CobQ family. CobQ subfamily.

It participates in cofactor biosynthesis; adenosylcobalamin biosynthesis. Functionally, catalyzes amidations at positions B, D, E, and G on adenosylcobyrinic A,C-diamide. NH(2) groups are provided by glutamine, and one molecule of ATP is hydrogenolyzed for each amidation. The polypeptide is Cobyric acid synthase (Rippkaea orientalis (strain PCC 8801 / RF-1) (Cyanothece sp. (strain PCC 8801))).